The primary structure comprises 369 residues: tRNA pseudouridine synthase D (369 aa).

The active-site Nucleophile is the Asp80. The region spanning 156–318 (GIPNWFGEQR…LKQERRALRL (163 aa)) is the TRUD domain.

This sequence belongs to the pseudouridine synthase TruD family.

The enzyme catalyses uridine(13) in tRNA = pseudouridine(13) in tRNA. In terms of biological role, responsible for synthesis of pseudouridine from uracil-13 in transfer RNAs. The sequence is that of tRNA pseudouridine synthase D from Xanthomonas axonopodis pv. citri (strain 306).